Consider the following 181-residue polypeptide: ATP synthase subunit delta (181 aa).

The protein belongs to the ATPase delta chain family. In terms of assembly, F-type ATPases have 2 components, F(1) - the catalytic core - and F(0) - the membrane proton channel. F(1) has five subunits: alpha(3), beta(3), gamma(1), delta(1), epsilon(1). F(0) has three main subunits: a(1), b(2) and c(10-14). The alpha and beta chains form an alternating ring which encloses part of the gamma chain. F(1) is attached to F(0) by a central stalk formed by the gamma and epsilon chains, while a peripheral stalk is formed by the delta and b chains.

The protein localises to the cell membrane. Its function is as follows. F(1)F(0) ATP synthase produces ATP from ADP in the presence of a proton or sodium gradient. F-type ATPases consist of two structural domains, F(1) containing the extramembraneous catalytic core and F(0) containing the membrane proton channel, linked together by a central stalk and a peripheral stalk. During catalysis, ATP synthesis in the catalytic domain of F(1) is coupled via a rotary mechanism of the central stalk subunits to proton translocation. In terms of biological role, this protein is part of the stalk that links CF(0) to CF(1). It either transmits conformational changes from CF(0) to CF(1) or is implicated in proton conduction. In Oceanobacillus iheyensis (strain DSM 14371 / CIP 107618 / JCM 11309 / KCTC 3954 / HTE831), this protein is ATP synthase subunit delta.